The following is a 109-amino-acid chain: Large ribosomal subunit protein uL24 (109 aa).

This sequence belongs to the universal ribosomal protein uL24 family. In terms of assembly, part of the 50S ribosomal subunit.

Its function is as follows. One of two assembly initiator proteins, it binds directly to the 5'-end of the 23S rRNA, where it nucleates assembly of the 50S subunit. Functionally, one of the proteins that surrounds the polypeptide exit tunnel on the outside of the subunit. The protein is Large ribosomal subunit protein uL24 of Legionella pneumophila subsp. pneumophila (strain Philadelphia 1 / ATCC 33152 / DSM 7513).